Here is a 501-residue protein sequence, read N- to C-terminus: Leukocyte receptor cluster member 9 (501 aa).

Disordered stretches follow at residues 1–43 (MGSR…PAPP), 61–86 (RQPHPGAPAPPGREAQPEAGAKKPPL), 203–234 (GQEAQAAPKRGSTRPLCTGHQEPGVEEPGELE), and 281–300 (QALGVPGGSAETTEAEWGPA). The C3H1-type zinc-finger motif lies at 40 to 67 (PAPPPACRFFLEGRCRFGARCRQPHPGA).

This is Leukocyte receptor cluster member 9 (LENG9) from Homo sapiens (Human).